The sequence spans 262 residues: Tetrahydromethanopterin S-methyltransferase subunit C (262 aa).

Helical transmembrane passes span 27-47 (LVGI…GGLL), 72-92 (PSIG…GVLI), 98-118 (LPVL…GFIV), 145-165 (ALAI…DIII), 173-193 (VIAL…NACI), 200-220 (KRTM…FAIA), and 222-242 (LDIV…GTFV).

This sequence belongs to the MtrC family. As to quaternary structure, the complex is composed of 8 subunits; MtrA, MtrB, MtrC, MtrD, MtrE, MtrF, MtrG and MtrH.

The protein localises to the cell membrane. The catalysed reaction is 5-methyl-5,6,7,8-tetrahydromethanopterin + coenzyme M + 2 Na(+)(in) = 5,6,7,8-tetrahydromethanopterin + methyl-coenzyme M + 2 Na(+)(out). It participates in one-carbon metabolism; methanogenesis from CO(2); methyl-coenzyme M from 5,10-methylene-5,6,7,8-tetrahydromethanopterin: step 2/2. Part of a complex that catalyzes the formation of methyl-coenzyme M and tetrahydromethanopterin from coenzyme M and methyl-tetrahydromethanopterin. This is an energy-conserving, sodium-ion translocating step. This Methanococcus maripaludis (strain C5 / ATCC BAA-1333) protein is Tetrahydromethanopterin S-methyltransferase subunit C.